Consider the following 1459-residue polypeptide: PPE family protein PPE34 (1459 aa).

The protein belongs to the mycobacterial PPE family. As to quaternary structure, interacts with human TLR2.

The protein localises to the cell membrane. It is found in the secreted. The protein resides in the cell wall. It localises to the cell surface. Functionally, facilitates a shift in the ensuing immunity toward the Th2 phenotype and could aid in immune evasion by mycobacteria. Interacts with human Toll-like receptor 2 (TLR2) and triggers functional maturation of human dendritic cells (DCs), leading to secretion of IL-4, IL-5 and IL-10 from CD4(+) T cells and induction of Th2 immune response. Maturation of DCs involves PI3K, ERK1/2, p38 MAPK and NF-kappa-B signaling pathways. This Mycobacterium tuberculosis (strain ATCC 25618 / H37Rv) protein is PPE family protein PPE34.